We begin with the raw amino-acid sequence, 263 residues long: Type III pantothenate kinase (263 aa).

14–21 (DIGNTSVN) is an ATP binding site. Position 115–118 (115–118 (GADR)) interacts with substrate. Residue aspartate 117 is the Proton acceptor of the active site. Residue aspartate 137 coordinates K(+). Position 140 (threonine 140) interacts with ATP. Threonine 192 serves as a coordination point for substrate.

The protein belongs to the type III pantothenate kinase family. In terms of assembly, homodimer. It depends on NH4(+) as a cofactor. Requires K(+) as cofactor.

It localises to the cytoplasm. The catalysed reaction is (R)-pantothenate + ATP = (R)-4'-phosphopantothenate + ADP + H(+). Its pathway is cofactor biosynthesis; coenzyme A biosynthesis; CoA from (R)-pantothenate: step 1/5. Catalyzes the phosphorylation of pantothenate (Pan), the first step in CoA biosynthesis. The chain is Type III pantothenate kinase from Dehalococcoides mccartyi (strain ATCC BAA-2100 / JCM 16839 / KCTC 5957 / BAV1).